A 297-amino-acid polypeptide reads, in one-letter code: Aspartate carbamoyltransferase catalytic subunit (297 aa).

2 residues coordinate carbamoyl phosphate: Arg52 and Thr53. Lys80 is a binding site for L-aspartate. Arg102, His130, and Gln133 together coordinate carbamoyl phosphate. Arg167 and Arg217 together coordinate L-aspartate. Carbamoyl phosphate contacts are provided by Gly256 and Pro257.

The protein belongs to the aspartate/ornithine carbamoyltransferase superfamily. ATCase family. In terms of assembly, heterododecamer (2C3:3R2) of six catalytic PyrB chains organized as two trimers (C3), and six regulatory PyrI chains organized as three dimers (R2).

The enzyme catalyses carbamoyl phosphate + L-aspartate = N-carbamoyl-L-aspartate + phosphate + H(+). Its pathway is pyrimidine metabolism; UMP biosynthesis via de novo pathway; (S)-dihydroorotate from bicarbonate: step 2/3. Functionally, catalyzes the condensation of carbamoyl phosphate and aspartate to form carbamoyl aspartate and inorganic phosphate, the committed step in the de novo pyrimidine nucleotide biosynthesis pathway. The chain is Aspartate carbamoyltransferase catalytic subunit from Helicobacter hepaticus (strain ATCC 51449 / 3B1).